We begin with the raw amino-acid sequence, 69 residues long: MKQLIIDLIKLYRYSIGLLIPPSCRFYPTCSNYMHEALVKHGLIKGLWLGMKRILRCHPWNQGGYDPVP.

Belongs to the UPF0161 family.

Its subcellular location is the cell inner membrane. Could be involved in insertion of integral membrane proteins into the membrane. This Nitrosomonas europaea (strain ATCC 19718 / CIP 103999 / KCTC 2705 / NBRC 14298) protein is Putative membrane protein insertion efficiency factor.